Reading from the N-terminus, the 224-residue chain is Protein YiiM (224 aa).

The region spanning 26–163 (IQVDGELMLT…VSADAPLELV (138 aa)) is the MOSC domain.

As to quaternary structure, monomer.

The sequence is that of Protein YiiM (yiiM) from Escherichia coli (strain K12).